Consider the following 186-residue polypeptide: UPF0157 protein SCO7215 (186 aa).

This sequence belongs to the UPF0157 (GrpB) family.

This Streptomyces coelicolor (strain ATCC BAA-471 / A3(2) / M145) protein is UPF0157 protein SCO7215.